Reading from the N-terminus, the 324-residue chain is MSNEVEQKKSIKTINDLPGISQTVINKLIEAGYSSLETLAVASPQDLSVAAGIPLSTAQKIIKEARDALDIRFKTALEVKKERMNVKKISTGSQALDGLLAGGIETRTMTEFFGEFGSGKTQLCHQLSVNVQLPPEKGGLSGKAVYIDTEGTFRWERIENMAKALGLDIDNVMNNIYYIRAINTDHQIAIVDDLQELVSKDPSIKLIVVDSVTSHFRAEYPGRENLAVRQQKLNKHLHQLTRLAEVYDIAVIITNQVMARPDMFYGDPTVAVGGHTLYHVPGIRIQLKKSRGNRRIARVVDAPHLPEGEVVFALTEEGIRDAEE.

114–121 (GEFGSGKT) is a binding site for ATP.

This sequence belongs to the eukaryotic RecA-like protein family.

Involved in DNA repair and in homologous recombination. Binds and assemble on single-stranded DNA to form a nucleoprotein filament. Hydrolyzes ATP in a ssDNA-dependent manner and promotes DNA strand exchange between homologous DNA molecules. This is DNA repair and recombination protein RadA from Saccharolobus islandicus (strain Y.N.15.51 / Yellowstone #2) (Sulfolobus islandicus).